Reading from the N-terminus, the 65-residue chain is UPF0434 protein RPB_0294 (65 aa).

This sequence belongs to the UPF0434 family.

The protein is UPF0434 protein RPB_0294 of Rhodopseudomonas palustris (strain HaA2).